We begin with the raw amino-acid sequence, 328 residues long: Delta-aminolevulinic acid dehydratase (328 aa).

Lys200 functions as the Schiff-base intermediate with substrate in the catalytic mechanism. Positions 210 and 222 each coordinate 5-aminolevulinate. Residue Glu238 coordinates Mg(2+). Lys253 (schiff-base intermediate with substrate) is an active-site residue. 5-aminolevulinate is bound by residues Ser279 and Tyr318.

This sequence belongs to the ALAD family. In terms of assembly, homooctamer.

It catalyses the reaction 2 5-aminolevulinate = porphobilinogen + 2 H2O + H(+). It participates in porphyrin-containing compound metabolism; protoporphyrin-IX biosynthesis; coproporphyrinogen-III from 5-aminolevulinate: step 1/4. Its activity is regulated as follows. Stimulated by magnesium, inhibited by zinc. In terms of biological role, catalyzes an early step in the biosynthesis of tetrapyrroles. Binds two molecules of 5-aminolevulinate per subunit, each at a distinct site, and catalyzes their condensation to form porphobilinogen. In Chlorobaculum tepidum (strain ATCC 49652 / DSM 12025 / NBRC 103806 / TLS) (Chlorobium tepidum), this protein is Delta-aminolevulinic acid dehydratase (hemB).